A 219-amino-acid polypeptide reads, in one-letter code: Large ribosomal subunit protein bL25 (219 aa).

The interval V193–E219 is disordered. Over residues V209–E219 the composition is skewed to polar residues.

The protein belongs to the bacterial ribosomal protein bL25 family. CTC subfamily. Part of the 50S ribosomal subunit; part of the 5S rRNA/L5/L18/L25 subcomplex. Contacts the 5S rRNA. Binds to the 5S rRNA independently of L5 and L18.

This is one of the proteins that binds to the 5S RNA in the ribosome where it forms part of the central protuberance. The polypeptide is Large ribosomal subunit protein bL25 (Legionella pneumophila (strain Corby)).